Here is a 977-residue protein sequence, read N- to C-terminus: Phosphatidylinositol 4-kinase PIK1alpha (977 aa).

Positions Met1–Ile125 constitute a PIK helical domain. The disordered stretch occupies residues Met205–Asp261. A compositionally biased stretch (polar residues) spans Ala220–Ala233. Residues Asp250–Asp261 show a composition bias toward acidic residues. A PI3K/PI4K catalytic domain is found at Glu679 to Met960. The tract at residues Lys685–Ser691 is G-loop. The tract at residues Gln826–Asn834 is catalytic loop. The activation loop stretch occupies residues His845 to Thr869.

This sequence belongs to the PI3/PI4-kinase family. Type III PI4K subfamily.

It localises to the nucleus. The enzyme catalyses a 1,2-diacyl-sn-glycero-3-phospho-(1D-myo-inositol) + ATP = a 1,2-diacyl-sn-glycero-3-phospho-(1D-myo-inositol 4-phosphate) + ADP + H(+). In terms of biological role, acts on phosphatidylinositol (PI) in the first committed step in the production of the second messenger inositol 1,4,5,-trisphosphate. The protein is Phosphatidylinositol 4-kinase PIK1alpha (PIKALPHA) of Candida albicans (strain SC5314 / ATCC MYA-2876) (Yeast).